Consider the following 168-residue polypeptide: G/U mismatch-specific DNA glycosylase (168 aa).

This sequence belongs to the uracil-DNA glycosylase (UDG) superfamily. TDG/mug family. As to quaternary structure, binds DNA as a monomer.

It localises to the cytoplasm. It catalyses the reaction Specifically hydrolyzes mismatched double-stranded DNA and polynucleotides, releasing free uracil.. Functionally, excises ethenocytosine and uracil, which can arise by alkylation or deamination of cytosine, respectively, from the corresponding mispairs with guanine in ds-DNA. It is capable of hydrolyzing the carbon-nitrogen bond between the sugar-phosphate backbone of the DNA and the mispaired base. The complementary strand guanine functions in substrate recognition. Required for DNA damage lesion repair in stationary-phase cells. This is G/U mismatch-specific DNA glycosylase from Klebsiella pneumoniae subsp. pneumoniae (strain ATCC 700721 / MGH 78578).